Reading from the N-terminus, the 107-residue chain is Nucleoid-associated protein Mmar10_0436 (107 aa).

This sequence belongs to the YbaB/EbfC family. Homodimer.

The protein resides in the cytoplasm. Its subcellular location is the nucleoid. In terms of biological role, binds to DNA and alters its conformation. May be involved in regulation of gene expression, nucleoid organization and DNA protection. This chain is Nucleoid-associated protein Mmar10_0436, found in Maricaulis maris (strain MCS10) (Caulobacter maris).